The chain runs to 432 residues: Adenylosuccinate synthetase (432 aa).

GTP-binding positions include 12 to 18 (GDEGKGK) and 40 to 42 (GHT). Asp13 (proton acceptor) is an active-site residue. Mg(2+) contacts are provided by Asp13 and Gly40. Residues 13–16 (DEGK), 38–41 (NAGH), Thr133, Arg147, Gln228, Thr243, and Arg307 each bind IMP. His41 (proton donor) is an active-site residue. 303-309 (TTTGRPR) contributes to the substrate binding site. GTP-binding positions include Arg309, 335-337 (KLD), and 417-419 (GVG).

It belongs to the adenylosuccinate synthetase family. In terms of assembly, homodimer. It depends on Mg(2+) as a cofactor.

The protein resides in the cytoplasm. It catalyses the reaction IMP + L-aspartate + GTP = N(6)-(1,2-dicarboxyethyl)-AMP + GDP + phosphate + 2 H(+). Its pathway is purine metabolism; AMP biosynthesis via de novo pathway; AMP from IMP: step 1/2. Its function is as follows. Plays an important role in the de novo pathway of purine nucleotide biosynthesis. Catalyzes the first committed step in the biosynthesis of AMP from IMP. This Nocardioides sp. (strain ATCC BAA-499 / JS614) protein is Adenylosuccinate synthetase.